The following is a 106-amino-acid chain: A-type ATP synthase subunit F (106 aa).

This sequence belongs to the V-ATPase F subunit family. In terms of assembly, has multiple subunits with at least A(3), B(3), C, D, E, F, H, I and proteolipid K(x).

It localises to the cell membrane. Component of the A-type ATP synthase that produces ATP from ADP in the presence of a proton gradient across the membrane. In Methanosphaera stadtmanae (strain ATCC 43021 / DSM 3091 / JCM 11832 / MCB-3), this protein is A-type ATP synthase subunit F.